Reading from the N-terminus, the 244-residue chain is Biosynthetic peptidoglycan transglycosylase (244 aa).

A helical membrane pass occupies residues 26–46 (FLSYFIGLTVALTFLFRFVPI).

This sequence belongs to the glycosyltransferase 51 family.

The protein localises to the cell inner membrane. The enzyme catalyses [GlcNAc-(1-&gt;4)-Mur2Ac(oyl-L-Ala-gamma-D-Glu-L-Lys-D-Ala-D-Ala)](n)-di-trans,octa-cis-undecaprenyl diphosphate + beta-D-GlcNAc-(1-&gt;4)-Mur2Ac(oyl-L-Ala-gamma-D-Glu-L-Lys-D-Ala-D-Ala)-di-trans,octa-cis-undecaprenyl diphosphate = [GlcNAc-(1-&gt;4)-Mur2Ac(oyl-L-Ala-gamma-D-Glu-L-Lys-D-Ala-D-Ala)](n+1)-di-trans,octa-cis-undecaprenyl diphosphate + di-trans,octa-cis-undecaprenyl diphosphate + H(+). It functions in the pathway cell wall biogenesis; peptidoglycan biosynthesis. Functionally, peptidoglycan polymerase that catalyzes glycan chain elongation from lipid-linked precursors. This is Biosynthetic peptidoglycan transglycosylase from Mannheimia succiniciproducens (strain KCTC 0769BP / MBEL55E).